The following is a 1207-amino-acid chain: DNA-directed RNA polymerase subunit beta' (1207 aa).

Zn(2+) contacts are provided by Cys60, Cys62, Cys75, and Cys78. Residues Asp449, Asp451, and Asp453 each contribute to the Mg(2+) site. The Zn(2+) site is built by Cys822, Cys896, Cys903, and Cys906.

Belongs to the RNA polymerase beta' chain family. In terms of assembly, the RNAP catalytic core consists of 2 alpha, 1 beta, 1 beta' and 1 omega subunit. When a sigma factor is associated with the core the holoenzyme is formed, which can initiate transcription. Mg(2+) serves as cofactor. Requires Zn(2+) as cofactor.

It catalyses the reaction RNA(n) + a ribonucleoside 5'-triphosphate = RNA(n+1) + diphosphate. DNA-dependent RNA polymerase catalyzes the transcription of DNA into RNA using the four ribonucleoside triphosphates as substrates. This Staphylococcus epidermidis (strain ATCC 35984 / DSM 28319 / BCRC 17069 / CCUG 31568 / BM 3577 / RP62A) protein is DNA-directed RNA polymerase subunit beta'.